We begin with the raw amino-acid sequence, 399 residues long: Probable F-box protein At4g22060 (399 aa).

Positions 12 to 48 constitute an F-box domain; the sequence is SWSKLPLDLLIMVFERLGFVDFQRTKSVCLAWLYASR.

This chain is Probable F-box protein At4g22060, found in Arabidopsis thaliana (Mouse-ear cress).